The sequence spans 531 residues: Peptide chain release factor 3 (531 aa).

The tr-type G domain occupies 10 to 278; it reads RRRRTFAIIS…SLIDWAPAPK (269 aa). Residues 19–26, 87–91, and 141–144 each bind GTP; these read SHPDAGKT, DTPGH, and NKYD.

Belongs to the TRAFAC class translation factor GTPase superfamily. Classic translation factor GTPase family. PrfC subfamily.

The protein localises to the cytoplasm. Its function is as follows. Increases the formation of ribosomal termination complexes and stimulates activities of RF-1 and RF-2. It binds guanine nucleotides and has strong preference for UGA stop codons. It may interact directly with the ribosome. The stimulation of RF-1 and RF-2 is significantly reduced by GTP and GDP, but not by GMP. This is Peptide chain release factor 3 from Neisseria meningitidis serogroup C / serotype 2a (strain ATCC 700532 / DSM 15464 / FAM18).